A 410-amino-acid polypeptide reads, in one-letter code: LL-diaminopimelate aminotransferase (410 aa).

2 residues coordinate substrate: tyrosine 15 and glycine 42. Pyridoxal 5'-phosphate-binding positions include tyrosine 72, 108–109 (TK), tyrosine 132, asparagine 186, tyrosine 217, and 245–247 (SFS). Positions 109, 132, and 186 each coordinate substrate. Lysine 248 is subject to N6-(pyridoxal phosphate)lysine. Residues arginine 256 and asparagine 291 each coordinate pyridoxal 5'-phosphate. Substrate-binding residues include asparagine 291 and arginine 387.

Belongs to the class-I pyridoxal-phosphate-dependent aminotransferase family. LL-diaminopimelate aminotransferase subfamily. Homodimer. Pyridoxal 5'-phosphate serves as cofactor.

It catalyses the reaction (2S,6S)-2,6-diaminopimelate + 2-oxoglutarate = (S)-2,3,4,5-tetrahydrodipicolinate + L-glutamate + H2O + H(+). The protein operates within amino-acid biosynthesis; L-lysine biosynthesis via DAP pathway; LL-2,6-diaminopimelate from (S)-tetrahydrodipicolinate (aminotransferase route): step 1/1. Functionally, involved in the synthesis of meso-diaminopimelate (m-DAP or DL-DAP), required for both lysine and peptidoglycan biosynthesis. Catalyzes the direct conversion of tetrahydrodipicolinate to LL-diaminopimelate. The polypeptide is LL-diaminopimelate aminotransferase (Lawsonia intracellularis (strain PHE/MN1-00)).